Consider the following 577-residue polypeptide: Urease subunit alpha (577 aa).

In terms of domain architecture, Urease spans 136 to 577 (GAIDCHVHLI…LPMAQRYFLF (442 aa)). Residues His141, His143, and Lys224 each contribute to the Ni(2+) site. Lys224 carries the post-translational modification N6-carboxylysine. His226 lines the substrate pocket. Residues His253 and His279 each contribute to the Ni(2+) site. The active-site Proton donor is the His327. Asp367 provides a ligand contact to Ni(2+).

This sequence belongs to the metallo-dependent hydrolases superfamily. Urease alpha subunit family. Heterotrimer of UreA (gamma), UreB (beta) and UreC (alpha) subunits. Three heterotrimers associate to form the active enzyme. Ni cation is required as a cofactor. Post-translationally, carboxylation allows a single lysine to coordinate two nickel ions.

Its subcellular location is the cytoplasm. It catalyses the reaction urea + 2 H2O + H(+) = hydrogencarbonate + 2 NH4(+). It functions in the pathway nitrogen metabolism; urea degradation; CO(2) and NH(3) from urea (urease route): step 1/1. The polypeptide is Urease subunit alpha (Mycobacterium ulcerans (strain Agy99)).